Consider the following 653-residue polypeptide: Potassium voltage-gated channel subfamily A member 4 (653 aa).

Residues 1 to 304 (MEVAMVSAES…LLFEYPESSS (304 aa)) lie on the Cytoplasmic side of the membrane. The interval 24 to 148 (QARARERERL…RFYYSEDDHG (125 aa)) is disordered. Low complexity predominate over residues 36–52 (SRAAAAAAVAAATAAVE). Positions 81–97 (GSRRRRRQRSEKKKAHY) are enriched in basic residues. Position 90 is a phosphoserine; by PKA (Ser90). Ser122 is subject to Phosphoserine. Over residues 122–137 (SEEEEDEEEEEEEEEE) the composition is skewed to acidic residues. Residues 305–326 (PARGIAIVSVLVILISIVIFCL) traverse the membrane as a helical segment. The Extracellular portion of the chain corresponds to 327–370 (ETLPEFRDDRDLVMALSAGGHGGLLNDTSAPHLENSGHTIFNDP). N-linked (GlcNAc...) asparagine glycosylation is present at Asn352. Residues 371–392 (FFIVETVCIVWFSFEFVVRCFA) traverse the membrane as a helical segment. Residues 393–403 (CPSQALFFKNI) lie on the Cytoplasmic side of the membrane. Residues 404–424 (MNIIDIVSILPYFITLGTDLA) traverse the membrane as a helical segment. Topologically, residues 425–439 (QQQGGGNGQQQQAMS) are extracellular. Residues 440-460 (FAILRIIRLVRVFRIFKLSRH) traverse the membrane as a helical; Voltage-sensor segment. At 461–475 (SKGLQILGHTLRASM) the chain is on the cytoplasmic side. The interval 462-475 (KGLQILGHTLRASM) is S4-S5 linker. Residues 476-497 (RELGLLIFFLFIGVILFSSAVY) traverse the membrane as a helical segment. Over 498-511 (FAEADEPTTHFQSI) the chain is Extracellular. The segment at residues 512–523 (PDAFWWAVVTMT) is an intramembrane region (helical). The Selectivity filter signature appears at 524–529 (TVGYGD). Residues 524–531 (TVGYGDMK) lie within the membrane without spanning it. Residues 532-538 (PITVGGK) lie on the Extracellular side of the membrane. Residues 539–567 (IVGSLCAIAGVLTIALPVPVIVSNFNYFY) traverse the membrane as a helical segment. Residues 568 to 653 (HRETENEEQT…SNAKAVETDV (86 aa)) lie on the Cytoplasmic side of the membrane. Ser599 bears the Phosphoserine; by PKA mark. The segment covering 629-640 (CQGKGDDSETDK) has biased composition (basic and acidic residues). Positions 629-653 (CQGKGDDSETDKNNCSNAKAVETDV) are disordered. The short motif at 651 to 653 (TDV) is the PDZ-binding element.

It belongs to the potassium channel family. A (Shaker) (TC 1.A.1.2) subfamily. Kv1.4/KCNA4 sub-subfamily. Homotetramer and heterotetramer of potassium channel proteins. Interacts with KCNAB1 and KCNAB2. Interacts with DLG1, DLG2 and DLG4 via their PDZ domains. Interacts with SIGMAR1. Detected in a complex with KCNA1. Interacts with KCNA2. Part of a complex containing KCNA1, KCNAB1 and LGI1. Interacts (via cytoplasmic N-terminal domain) with KCNRG. In terms of tissue distribution, expressed in brain, and at lower levels in the testis, lung, kidney, colon and heart. Detected in heart ventricle.

The protein localises to the cell membrane. The protein resides in the cell projection. It is found in the axon. It catalyses the reaction K(+)(in) = K(+)(out). Inhibited by 4-aminopyridine (4-AP), but not by tetraethylammonium (TEA) and charybdotoxin (CTX). Voltage-gated potassium channel that mediates transmembrane potassium transport in excitable membranes. Forms tetrameric potassium-selective channels through which potassium ions pass in accordance with their electrochemical gradient. The channel alternates between opened and closed conformations in response to the voltage difference across the membrane. Can form functional homotetrameric channels and heterotetrameric channels that contain variable proportions of KCNA1, KCNA2, KCNA4, KCNA5, and possibly other family members as well; channel properties depend on the type of alpha subunits that are part of the channel. Channel properties are modulated by cytoplasmic beta subunits that regulate the subcellular location of the alpha subunits and promote rapid inactivation. In vivo, membranes probably contain a mixture of heteromeric potassium channel complexes, making it difficult to assign currents observed in intact tissues to any particular potassium channel family member. Homotetrameric KCNA4 forms a potassium channel that opens in response to membrane depolarization, followed by rapid spontaneous channel closure. Likewise, a heterotetrameric channel formed by KCNA1 and KCNA4 shows rapid inactivation. In Homo sapiens (Human), this protein is Potassium voltage-gated channel subfamily A member 4 (KCNA4).